Here is a 90-residue protein sequence, read N- to C-terminus: Small ribosomal subunit protein bS16 (90 aa).

Belongs to the bacterial ribosomal protein bS16 family.

This chain is Small ribosomal subunit protein bS16, found in Lysinibacillus sphaericus (strain C3-41).